Here is a 268-residue protein sequence, read N- to C-terminus: Leucyl/phenylalanyl-tRNA--protein transferase (268 aa).

The protein belongs to the L/F-transferase family.

Its subcellular location is the cytoplasm. The enzyme catalyses N-terminal L-lysyl-[protein] + L-leucyl-tRNA(Leu) = N-terminal L-leucyl-L-lysyl-[protein] + tRNA(Leu) + H(+). It carries out the reaction N-terminal L-arginyl-[protein] + L-leucyl-tRNA(Leu) = N-terminal L-leucyl-L-arginyl-[protein] + tRNA(Leu) + H(+). The catalysed reaction is L-phenylalanyl-tRNA(Phe) + an N-terminal L-alpha-aminoacyl-[protein] = an N-terminal L-phenylalanyl-L-alpha-aminoacyl-[protein] + tRNA(Phe). Functionally, functions in the N-end rule pathway of protein degradation where it conjugates Leu, Phe and, less efficiently, Met from aminoacyl-tRNAs to the N-termini of proteins containing an N-terminal arginine or lysine. This is Leucyl/phenylalanyl-tRNA--protein transferase from Zymomonas mobilis subsp. mobilis (strain ATCC 31821 / ZM4 / CP4).